The following is an 856-amino-acid chain: Cyclic di-GMP phosphodiesterase PdeB (856 aa).

Helical transmembrane passes span 7–27 and 230–250; these read ILVF…YCLG and WVSL…YVWL. The 48-residue stretch at 303–350 folds into the PAS domain; sequence QKERGKITLESIAEAVILTDIEAKVIYMNPKAETLLEVASSNAVGESL. The GGDEF domain occupies 454-587; sequence RSLAVCYLDL…GTNQIHIYDD (134 aa). Positions 598–852 constitute an EAL domain; it reads APKWAVRIAQ…SYCEQFETRL (255 aa).

The protein resides in the cell membrane. It catalyses the reaction 3',3'-c-di-GMP + H2O = 5'-phosphoguanylyl(3'-&gt;5')guanosine + H(+). Functionally, affects motility and biofilm formation, and is linked to the regulation of sulfate uptake and assimilation. The polypeptide is Cyclic di-GMP phosphodiesterase PdeB (pdeB) (Shewanella oneidensis (strain ATCC 700550 / JCM 31522 / CIP 106686 / LMG 19005 / NCIMB 14063 / MR-1)).